A 379-amino-acid chain; its full sequence is Chaperone protein DnaJ (379 aa).

Positions 7–72 (CYYETLEVER…DKRAAYDRYG (66 aa)) constitute a J domain. The CR-type zinc-finger motif lies at 135 to 213 (GKTAQIEIPV…CTGSGRVTKE (79 aa)). The Zn(2+) site is built by Cys-148, Cys-151, Cys-165, Cys-168, Cys-187, Cys-190, Cys-201, and Cys-204. CXXCXGXG motif repeat units follow at residues 148–155 (CESCSGTG), 165–172 (CSTCGGAG), 187–194 (CPSCQGRG), and 201–208 (CPSCTGSG).

It belongs to the DnaJ family. As to quaternary structure, homodimer. Requires Zn(2+) as cofactor.

The protein resides in the cytoplasm. Functionally, participates actively in the response to hyperosmotic and heat shock by preventing the aggregation of stress-denatured proteins and by disaggregating proteins, also in an autonomous, DnaK-independent fashion. Unfolded proteins bind initially to DnaJ; upon interaction with the DnaJ-bound protein, DnaK hydrolyzes its bound ATP, resulting in the formation of a stable complex. GrpE releases ADP from DnaK; ATP binding to DnaK triggers the release of the substrate protein, thus completing the reaction cycle. Several rounds of ATP-dependent interactions between DnaJ, DnaK and GrpE are required for fully efficient folding. Also involved, together with DnaK and GrpE, in the DNA replication of plasmids through activation of initiation proteins. The chain is Chaperone protein DnaJ from Rhodopseudomonas palustris (strain HaA2).